An 823-amino-acid chain; its full sequence is Molybdenum cofactor sulfurase (823 aa).

Lys-228 bears the N6-(pyridoxal phosphate)lysine mark. Residue Cys-392 is part of the active site. Positions 628–667 (SSTRLAEPRRGLGSRKSPLRPAMPGAFPQDTPTPEAERNP) are disordered. One can recognise an MOSC domain in the interval 644 to 819 (SPLRPAMPGA…VMVGDVVTPS (176 aa)).

The protein belongs to the class-V pyridoxal-phosphate-dependent aminotransferase family. MOCOS subfamily. Pyridoxal 5'-phosphate serves as cofactor.

It carries out the reaction Mo-molybdopterin + L-cysteine + AH2 = thio-Mo-molybdopterin + L-alanine + A + H2O. Its pathway is cofactor biosynthesis; molybdopterin biosynthesis. Functionally, sulfurates the molybdenum cofactor. Sulfation of molybdenum is essential for xanthine dehydrogenase (XDH) and aldehyde oxidase (ADO) enzymes in which molybdenum cofactor is liganded by 1 oxygen and 1 sulfur atom in active form. The polypeptide is Molybdenum cofactor sulfurase (Aspergillus niger (strain ATCC MYA-4892 / CBS 513.88 / FGSC A1513)).